The following is a 548-amino-acid chain: Tripartite motif-containing protein 55 (548 aa).

An RING-type zinc finger spans residues 10–66; it reads FSKEQQTMDNLEKQLICPICLEMFTKPVVILPCQHNLCRKCASDIFQASNPYLPTRG. A B box-type zinc finger spans residues 103 to 145; sequence NIIDIYKQESTRPEKKSDQPMCEEHEEERINIYCLNCEVPTCS. Residues C124, H127, C147, and H153 each contribute to the Zn(2+) site. Residues 168 to 248 are a coiled coil; that stretch reads QKSELSDGIA…EKLEHVRALI (81 aa). The region spanning 269–327 is the COS domain; it reads MDEPEMAVFLQNAKTLLKKISEASKAFQMEKIEHGYENMNHFTVNLNREEKIIREIDFY. A disordered region spans residues 326 to 532; that stretch reads FYREDEDEEE…PASGSGADSE (207 aa). Acidic residues-rich tracts occupy residues 328–339 and 347–360; these read REDEDEEEEEGG and GEVG…EEVE. Low complexity-rich tracts occupy residues 484 to 496 and 512 to 531; these read VAAA…AAVS and EAPP…GADS.

As to quaternary structure, homooligomer and heterooligomer. Interacts with titin/TTN. Interacts with myosins. Interacts with SQSTM1 and NBR1. Isoform 4 may not able to interact with isoform 1, isoform 2 and isoform 3. Probably interacts with TRIM63 and TRIM54. Targeted for degradation through the proteasomal and lysosomal pathways in the presence of SUMO3. Highly expressed in muscle. Low-level expression in liver.

It is found in the nucleus. The protein localises to the cytoplasm. It carries out the reaction S-ubiquitinyl-[E2 ubiquitin-conjugating enzyme]-L-cysteine + [acceptor protein]-L-lysine = [E2 ubiquitin-conjugating enzyme]-L-cysteine + N(6)-ubiquitinyl-[acceptor protein]-L-lysine.. E3 ubiquitin ligase that plays an important role in regulating cardiac development and contractility, muscle growth, metabolism, and fiber-type differentiation. Acts as a critical factor that regulates cardiomyocyte size during development in concert with TRIM63 by regulating E2F1-mediated gene expression. Plays a role in apoptosis induction in cardiomyocytes by promoting ubiquitination of the DUSP1 phosphatase. Promotes non-canonical NF-kappa-B signaling and B-cell-mediated immune responses by mediating NFKB2 'Lys-48'-linked ubiquitination and processing. In turn, NFKB2 is further processed by valosin-containing protein/VCP, an ATPase that mediates ubiquitin-dependent protein degradation by the proteasome. May play a role in preventing macrophages from producing inflammatory factors and migrating by downregulating the level of nuclear NF-kappa-B subunit RELA. Also modifies PPARG via polyubiquitination and accelerates PPARG proteasomal degradation to inhibit its activity. The chain is Tripartite motif-containing protein 55 (TRIM55) from Homo sapiens (Human).